Reading from the N-terminus, the 122-residue chain is Double-headed protease inhibitor, submandibular gland (122 aa).

2 Kazal-like domains span residues 10-70 (GGRK…ECDI) and 71-121 (ECTQ…QCQS). 6 disulfides stabilise this stretch: C16–C50, C28–C47, C36–C68, C72–C101, C79–C98, and C87–C119.

The protein localises to the secreted. Its function is as follows. This inhibitor is composed of two homologous actively inhibiting halves: one which inhibits trypsin, the other which inhibits elastase. The protein is Double-headed protease inhibitor, submandibular gland of Panthera uncia (Snow leopard).